A 703-amino-acid chain; its full sequence is Protein STRUBBELIG-RECEPTOR FAMILY 8 (703 aa).

A signal peptide spans 1–27 (MAIGDRAMFTVLLLFIASISGFSVVRC). At 28–291 (VTDPSDVQAL…GKGLSGGVVT (264 aa)) the chain is on the extracellular side. LRR repeat units lie at residues 96–120 (LKSLRKLDVSGNSIHDTLPYQLPPN), 122–142 (TSLNLARNNLSGNLPYSISAM), 143–165 (GSLSYMNVSGNSLTMSIGDIFAD), 166–190 (HKSLATLDLSHNNFSGDLPSSLSTV), 192–212 (TLSVLYVQNNQLTGSIDVLSG), 213–233 (LPLKTLNVANNHFNGSIPKEL), and 234–256 (SSIQTLIYDGNSFDNVPASPQPE). N-linked (GlcNAc...) asparagine glycans are attached at residues N120, N130, N149, and N178. N-linked (GlcNAc...) asparagine glycosylation occurs at N226. The tract at residues 247–284 (DNVPASPQPERPGKKETPSGSKKPKIGSEEKSSDSGKG) is disordered. The chain crosses the membrane as a helical span at residues 292 to 312 (GIVFGSLFVAGIIALVLYLCL). Residues 313–703 (HKKKRKVRGS…PEHEHVDISF (391 aa)) are Cytoplasmic-facing. One can recognise a Protein kinase domain in the interval 395–672 (FSQENIIGEG…SEVVQQLVRL (278 aa)). ATP is bound by residues 401 to 409 (IGEGSLGRV) and K423.

The protein belongs to the protein kinase superfamily. Ser/Thr protein kinase family. Expressed in seedlings, roots, stems, leaves, flowers and siliques.

It localises to the membrane. In Arabidopsis thaliana (Mouse-ear cress), this protein is Protein STRUBBELIG-RECEPTOR FAMILY 8 (SRF8).